The sequence spans 320 residues: Heterogeneous nuclear ribonucleoprotein A1 (320 aa).

Methionine 1 bears the N-acetylmethionine mark. Serine 2 is modified (N-acetylserine; in Heterogeneous nuclear ribonucleoprotein A1, N-terminally processed). Serine 2 carries the phosphoserine modification. Lysine 3 bears the N6-acetyllysine; alternate mark. Residue lysine 3 forms a Glycyl lysine isopeptide (Lys-Gly) (interchain with G-Cter in SUMO2); alternate linkage. Serine 4 and serine 6 each carry phosphoserine. A globular A domain region spans residues 4 to 94; that stretch reads SESPKEPEQL…EPKRAVSRED (91 aa). Lysine 8 participates in a covalent cross-link: Glycyl lysine isopeptide (Lys-Gly) (interchain with G-Cter in SUMO2). 2 RRM domains span residues 14–97 and 105–184; these read RKLF…DSQR and KKIF…LCKQ. Serine 22 carries the post-translational modification Phosphoserine. Lysine 78 is covalently cross-linked (Glycyl lysine isopeptide (Lys-Gly) (interchain with G-Cter in SUMO2)). Residues 95–185 are globular B domain; the sequence is SQRPGAHLTV…EVRKALCKQE (91 aa). A Glycyl lysine isopeptide (Lys-Gly) (interchain with G-Cter in SUMO) cross-link involves residue lysine 113. Residues lysine 179 and lysine 183 each participate in a glycyl lysine isopeptide (Lys-Gly) (interchain with G-Cter in SUMO2) cross-link. Residues 188-216 are disordered; it reads SASSSQRGRSGSGNFGGGRGGGFGGNDNF. Serine 192 carries the phosphoserine; by MKNK2 modification. Arginine 194 carries the post-translational modification Asymmetric dimethylarginine; alternate. At arginine 194 the chain carries Dimethylated arginine; alternate. The residue at position 194 (arginine 194) is an Omega-N-methylarginine; alternate. Positions 197-216 are enriched in gly residues; it reads SGSGNFGGGRGGGFGGNDNF. Serine 199 bears the Phosphoserine mark. Asymmetric dimethylarginine; alternate is present on residues arginine 206, arginine 218, arginine 225, and arginine 232. Arginine 206 is modified (dimethylated arginine; alternate). An omega-N-methylarginine; alternate mark is found at arginine 206, arginine 218, arginine 225, and arginine 232. Positions 218–240 are RNA-binding RGG-box; the sequence is RGGNFSGRGGFGGSRGGGGYGGS. At arginine 225 the chain carries Dimethylated arginine; alternate. The segment at 268 to 305 is nuclear targeting sequence; it reads NQSSNFGPMKGGNFGGRSSGPYGGGGQYFAKPRNQGGY. The segment at 271–320 is disordered; sequence SNFGPMKGGNFGGRSSGPYGGGGQYFAKPRNQGGYGGSSSSSSYGSGRRF. Positions 276 to 294 are enriched in gly residues; sequence MKGGNFGGRSSGPYGGGGQ. The residue at position 284 (arginine 284) is an Omega-N-methylarginine. Serine 285 carries the phosphoserine modification. Position 298 is an N6-acetyllysine; alternate (lysine 298). Lysine 298 is covalently cross-linked (Glycyl lysine isopeptide (Lys-Gly) (interchain with G-Cter in SUMO2); alternate). The residue at position 300 (arginine 300) is an Omega-N-methylarginine. The segment covering 308-320 has biased composition (low complexity); sequence SSSSSSYGSGRRF. At serine 309 the chain carries Phosphoserine. Serine 310, serine 311, and serine 312 each carry phosphoserine; by MKNK2. A phosphoserine mark is found at serine 313 and serine 316. Arginine 318 is subject to Omega-N-methylarginine.

As to quaternary structure, identified in the spliceosome C complex. Identified in a IGF2BP1-dependent mRNP granule complex containing untranslated mRNAs. Interacts with SEPT6. Interacts with C9orf72. Interacts with KHDRBS1. Interacts with UBQLN2. Interacts with PPIA/CYPA. Post-translationally, sumoylated.

It localises to the nucleus. The protein localises to the cytoplasm. In terms of biological role, involved in the packaging of pre-mRNA into hnRNP particles, transport of poly(A) mRNA from the nucleus to the cytoplasm and modulation of splice site selection. Plays a role in the splicing of pyruvate kinase PKM by binding repressively to sequences flanking PKM exon 9, inhibiting exon 9 inclusion and resulting in exon 10 inclusion and production of the PKM M2 isoform. Binds to the IRES and thereby inhibits the translation of the apoptosis protease activating factor APAF1. May bind to specific miRNA hairpins. The polypeptide is Heterogeneous nuclear ribonucleoprotein A1 (Hnrnpa1) (Rattus norvegicus (Rat)).